A 361-amino-acid chain; its full sequence is Dihydroorotate dehydrogenase (quinone) (361 aa).

FMN-binding positions include alanine 69–lysine 73 and threonine 93. Lysine 73 contributes to the substrate binding site. Asparagine 118–phenylalanine 122 contributes to the substrate binding site. FMN-binding residues include asparagine 147 and asparagine 180. Residue asparagine 180 participates in substrate binding. The active-site Nucleophile is the serine 183. A substrate-binding site is contributed by asparagine 185. Positions 221 and 249 each coordinate FMN. Residue asparagine 250–threonine 251 participates in substrate binding. FMN is bound by residues glycine 271, glycine 300, and tyrosine 321–threonine 322.

Belongs to the dihydroorotate dehydrogenase family. Type 2 subfamily. In terms of assembly, monomer. FMN is required as a cofactor.

The protein localises to the cell membrane. It catalyses the reaction (S)-dihydroorotate + a quinone = orotate + a quinol. It participates in pyrimidine metabolism; UMP biosynthesis via de novo pathway; orotate from (S)-dihydroorotate (quinone route): step 1/1. Its function is as follows. Catalyzes the conversion of dihydroorotate to orotate with quinone as electron acceptor. The protein is Dihydroorotate dehydrogenase (quinone) of Roseiflexus sp. (strain RS-1).